A 420-amino-acid chain; its full sequence is Serine/threonine transporter SstT (420 aa).

A run of 9 helical transmembrane segments spans residues 14–34, 40–60, 71–91, 172–192, 210–230, 283–303, 309–329, 332–352, and 356–376; these read IMIGIVIGTTLGFLVPEWTFI, LFVGALKAIAPILVFVLIIAS, YVGSILVVYLLATFLAAVVAV, ITTVVQMIIGIAPIGILGLVF, LLLLIGTMAVVALVVYPAIVF, IPLGATINMGGAAITITIMTL, LGMSVPIYLALLLSIIAAVSA, ASGIAGGSLLLIPLACSLFGI, and IAMQVVGVGFIVGVVQDSIET.

This sequence belongs to the dicarboxylate/amino acid:cation symporter (DAACS) (TC 2.A.23) family.

The protein localises to the cell membrane. It catalyses the reaction L-serine(in) + Na(+)(in) = L-serine(out) + Na(+)(out). The enzyme catalyses L-threonine(in) + Na(+)(in) = L-threonine(out) + Na(+)(out). Its function is as follows. Involved in the import of serine and threonine into the cell, with the concomitant import of sodium (symport system). The chain is Serine/threonine transporter SstT from Enterococcus faecalis (strain ATCC 700802 / V583).